The sequence spans 373 residues: MGIKGLNALINEHSPKAFRNGEMKTFFGRKVAIDASMCLYQFLIAVRQQDGQQLANEEGETTSHLMGFFYRTIRMVGYGIKPCYVFDGKPPVLKGGELEKRLKRREEAEKQRLDMKETGTLADIAKFERRTVRVTREQNDQAKKLLELMGIPYVDAPCEAEAQCAELAKGGKVYAAASEDMDTLCYETPYLLRHMTTAEARKLPVTEIDYAKVMEGLEMELPQFIDLCILLGCDYCETIKGVGPVTAFKLIKEHGSIEKVVEAIENNPKSKQKIPENWPYNEARELFLHPEVIPASECELEWKEPDEEALVDYMVRQHGFSEQRIRDGASKLRKSLKTGTQGRLDKFFVVKKRPAEEKKGKNTKEEKPKKKRK.

An N-domain region spans residues 1 to 105 (MGIKGLNALI…GELEKRLKRR (105 aa)). Asp34 is a binding site for Mg(2+). DNA contacts are provided by Arg47 and Arg71. Mg(2+) is bound by residues Asp87, Glu159, Glu161, Asp180, and Asp182. The segment at 123 to 254 (DIAKFERRTV…VTAFKLIKEH (132 aa)) is I-domain. A DNA-binding site is contributed by Glu159. Gly232 and Asp234 together coordinate DNA. A Mg(2+)-binding site is contributed by Asp234. Residues 340–348 (TQGRLDKFF) are interaction with PCNA. The disordered stretch occupies residues 347–373 (FFVVKKRPAEEKKGKNTKEEKPKKKRK).

It belongs to the XPG/RAD2 endonuclease family. FEN1 subfamily. In terms of assembly, interacts with PCNA. Three molecules of FEN1 bind to one PCNA trimer with each molecule binding to one PCNA monomer. PCNA stimulates the nuclease activity without altering cleavage specificity. Mg(2+) is required as a cofactor. Post-translationally, phosphorylated. Phosphorylation upon DNA damage induces relocalization to the nuclear plasma.

The protein resides in the nucleus. The protein localises to the nucleolus. Its subcellular location is the nucleoplasm. It localises to the mitochondrion. Functionally, structure-specific nuclease with 5'-flap endonuclease and 5'-3' exonuclease activities involved in DNA replication and repair. During DNA replication, cleaves the 5'-overhanging flap structure that is generated by displacement synthesis when DNA polymerase encounters the 5'-end of a downstream Okazaki fragment. It enters the flap from the 5'-end and then tracks to cleave the flap base, leaving a nick for ligation. Also involved in the long patch base excision repair (LP-BER) pathway, by cleaving within the apurinic/apyrimidinic (AP) site-terminated flap. Acts as a genome stabilization factor that prevents flaps from equilibrating into structures that lead to duplications and deletions. Also possesses 5'-3' exonuclease activity on nicked or gapped double-stranded DNA, and exhibits RNase H activity. Also involved in replication and repair of rDNA and in repairing mitochondrial DNA. This Komagataella phaffii (strain GS115 / ATCC 20864) (Yeast) protein is Flap endonuclease 1.